The following is a 458-amino-acid chain: ATP synthase subunit beta (458 aa).

148–155 (GGAGVGKT) is a binding site for ATP.

This sequence belongs to the ATPase alpha/beta chains family. As to quaternary structure, F-type ATPases have 2 components, CF(1) - the catalytic core - and CF(0) - the membrane proton channel. CF(1) has five subunits: alpha(3), beta(3), gamma(1), delta(1), epsilon(1). CF(0) has three main subunits: a(1), b(2) and c(9-12). The alpha and beta chains form an alternating ring which encloses part of the gamma chain. CF(1) is attached to CF(0) by a central stalk formed by the gamma and epsilon chains, while a peripheral stalk is formed by the delta and b chains.

Its subcellular location is the cell inner membrane. It carries out the reaction ATP + H2O + 4 H(+)(in) = ADP + phosphate + 5 H(+)(out). Its function is as follows. Produces ATP from ADP in the presence of a proton gradient across the membrane. The catalytic sites are hosted primarily by the beta subunits. This chain is ATP synthase subunit beta, found in Francisella philomiragia subsp. philomiragia (strain ATCC 25017 / CCUG 19701 / FSC 153 / O#319-036).